The following is a 1858-amino-acid chain: Nucleoporin NUP188 (1858 aa).

Belongs to the Nup188 family. Component of the nuclear pore complex (NPC). NPC constitutes the exclusive means of nucleocytoplasmic transport. NPCs allow the passive diffusion of ions and small molecules and the active, nuclear transport receptor-mediated bidirectional transport of macromolecules such as proteins, RNAs, ribonucleoparticles (RNPs), and ribosomal subunits across the nuclear envelope. Due to its 8-fold rotational symmetry, all subunits are present with 8 copies or multiples thereof. Part of a tetrameric NUP188-NUP170-NIC96-NUP53 module.

The protein localises to the nucleus. It is found in the nuclear pore complex. The protein resides in the nucleus membrane. Functions as a component of the nuclear pore complex (NPC). NPC components, collectively referred to as nucleoporins (NUPs), can play the role of both NPC structural components and of docking or interaction partners for transiently associated nuclear transport factors. NUP188 probably plays an important role in NPC assembly and organization. This chain is Nucleoporin NUP188 (NUP188), found in Chaetomium thermophilum (strain DSM 1495 / CBS 144.50 / IMI 039719) (Thermochaetoides thermophila).